The chain runs to 171 residues: PIDD1 alternative open reading frame protein (171 aa).

Disordered stretches follow at residues 1 to 22 and 76 to 156; these read MSGLQGPSVGDGCNGGGARAGG and ILAS…LCPA. Residues 84 to 99 show a composition bias toward low complexity; that stretch reads GPSAAGGHPGPAASEP.

In terms of assembly, interacts with calpain-2 catalytic subunit CAPN2. Post-translationally, cleaved in vitro following UV irradiation to induce caspase-mediated apoptosis and this cleavage is inhibited by a broad-spectrum caspase inhibitor.

The protein resides in the cytoplasm. It is found in the cytoskeleton. The chain is PIDD1 alternative open reading frame protein from Homo sapiens (Human).